The following is a 195-amino-acid chain: Inner membrane-spanning protein YciB (195 aa).

Helical transmembrane passes span 34–54 (IYGA…ALWL), 65–85 (FTLG…EDTF), 88–108 (WKAP…HFIG), 131–151 (LNIA…YVVF), and 160–180 (FKVF…GIFL).

The protein belongs to the YciB family.

The protein resides in the cell inner membrane. Functionally, plays a role in cell envelope biogenesis, maintenance of cell envelope integrity and membrane homeostasis. This chain is Inner membrane-spanning protein YciB, found in Pseudomonas paraeruginosa (strain DSM 24068 / PA7) (Pseudomonas aeruginosa (strain PA7)).